The primary structure comprises 360 residues: MRLLERLWGKKPSRKSDKKKKGTSNYAYAVTRVRAMKSKLLPKETYPRLLNMGIDEITRFIQESEYKNDVDELAMKYSGGDLAEHALNRNLALTYDKLLRITSGELNYLIAAYLLRYDIWNVKTLLRGKLYNASVEDILESLISAGEFTYTFLSELAAKATYQEIIDALKETDYYPLLQEFDGNNLAYIENELDKMYYSSLFAAIGKPRSKDRKLFARFIKLEVDVKNLGTLFRLKKAGVEKSDEIMPLMIEGGLELKPEKLATLPYEQFIDELRKTQYWDAIATVTGLETASLTIVESRLIRYYLESATTYSHVSPISIVPIMEYIIHKNNEVNNLRIIFRGKEADLSDTLIKDQLVVI.

A disordered region spans residues 1 to 23; it reads MRLLERLWGKKPSRKSDKKKKGT. Over residues 9–22 the composition is skewed to basic residues; the sequence is GKKPSRKSDKKKKG.

Belongs to the V-ATPase V0D/AC39 subunit family. Has multiple subunits with at least A(3), B(3), C, D, E, F, H, I and proteolipid K(x).

It localises to the cell membrane. Component of the A-type ATP synthase that produces ATP from ADP in the presence of a proton gradient across the membrane. This Methanosarcina acetivorans (strain ATCC 35395 / DSM 2834 / JCM 12185 / C2A) protein is A-type ATP synthase subunit C.